The chain runs to 146 residues: Anti-sigma F factor (146 aa).

Belongs to the anti-sigma-factor family.

It carries out the reaction L-seryl-[protein] + ATP = O-phospho-L-seryl-[protein] + ADP + H(+). It catalyses the reaction L-threonyl-[protein] + ATP = O-phospho-L-threonyl-[protein] + ADP + H(+). Binds to sigma F and blocks its ability to form an RNA polymerase holoenzyme (E-sigma F). Phosphorylates SpoIIAA on a serine residue. This phosphorylation may enable SpoIIAA to act as an anti-anti-sigma factor that counteracts SpoIIAB and thus releases sigma F from inhibition. This is Anti-sigma F factor from Geobacillus thermodenitrificans (strain NG80-2).